The following is a 1146-amino-acid chain: Inositol hexakisphosphate and diphosphoinositol-pentakisphosphate kinase (1146 aa).

Residues 1–33 (MSGIKKEPIESDEVPQQETKNNLPSAPSEMSPL) form a disordered region. Positions 16 to 25 (QQETKNNLPS) are enriched in polar residues. Phosphoserine is present on residues S31, S54, and S77. The segment at 93 to 185 (TALGNGNNTN…STSHPKPRLP (93 aa)) is disordered. The segment covering 96-106 (GNGNNTNTVTT) has biased composition (low complexity). Over residues 110-120 (KKADSESKSEA) the composition is skewed to basic and acidic residues. The span at 125–144 (LSNSNIVNDADNINSISKTG) shows a compositional bias: polar residues. Residues 164–178 (SVPTSSASSRKSSTS) show a composition bias toward low complexity. Residue 197-198 (AK) coordinates substrate. ATP contacts are provided by residues R278, K351, H358, R377, 402–405 (EQFM), and 412–414 (DVK). 377 to 378 (RK) serves as a coordination point for substrate. Substrate-binding residues include K414 and R428. Residues S430, D475, and 487 to 489 (DVN) each bind ATP. 492–495 (SFVK) is a binding site for substrate. The tract at residues 530–597 (REEKEQKWVF…VLQALRIALD (68 aa)) is polyphosphoinositide-binding domain. Phosphoserine occurs at positions 895 and 1107. A disordered region spans residues 1106–1146 (TSPNLSFQKRKTRRKSVSVEKLKRPASSGSSSSTSVNKTLD).

This sequence belongs to the histidine acid phosphatase family. VIP1 subfamily.

It localises to the cytoplasm. It is found in the cytoskeleton. The enzyme catalyses 1D-myo-inositol hexakisphosphate + ATP = 1-diphospho-1D-myo-inositol 2,3,4,5,6-pentakisphosphate + ADP. It carries out the reaction 5-diphospho-1D-myo-inositol 1,2,3,4,6-pentakisphosphate + ATP + H(+) = 1,5-bis(diphospho)-1D-myo-inositol 2,3,4,6-tetrakisphosphate + ADP. Its function is as follows. Bifunctional inositol kinase that acts in concert with the IP6K kinases to synthesize the diphosphate group-containing inositol pyrophosphates diphosphoinositol pentakisphosphate, PP-InsP5, and bis-diphosphoinositol tetrakisphosphate, (PP)2-InsP4. Phosphorylates inositol hexakisphosphate (InsP6) at position 1 to produce PP-InsP5 which is in turn phosphorylated by IP6Ks to produce (PP)2-InsP4. Alternatively, phosphorylates PP-InsP5 at position 1, produced by IP6Ks from InsP6, to produce (PP)2-InsP4. Required for maintaining cellular integrity, normal growth and interactions with the ARP complex. Acts as a regulator of the PHO80-PHO85 cyclin/cyclin-dependent kinase (CDK) complex, thereby regulating signaling of phosphate availability. Required for the function of the cortical actin cytoskeleton, possibly by participating in correct F-actin localization and ensuring polarized growth. Regulates polarized growth and modulates interphase microtubule cytoskeleton. Regulates microtubule dynamics without the requirement of microtubule plus-end tracking protein Mal3. Required for growth zone selection. The polypeptide is Inositol hexakisphosphate and diphosphoinositol-pentakisphosphate kinase (Saccharomyces cerevisiae (strain ATCC 204508 / S288c) (Baker's yeast)).